Reading from the N-terminus, the 345-residue chain is MSRYQEAGVDIHAGYELVNKIKKDVKSTRRVGTTGNIGSFGGTFDLSVLNIKEPVLVSGTDGVGTKLLIAQKMDKHDTIGIDCVAMCVNDILAQGAEPLYFLDYIATGKNDPDKIAQIVAGVAEGCRQAGTALIGGETAEMPDMYAKDEYDLAGFSSGVVEKSKLLTDANPQENDILIGLASSGIHSNGFSLVRQILFKDNKIDLSEKREEFGGKTIGEVILEPTRIYIDSVLPLVKENLVNGIAHITGGGLIENLPRMFADDLTAEIDASSWKVLPIFEYLKKLGNLSQDDCYETFNMGIGMVLAVSEDKLESVKKLLSDKDEDFYIIGNLRKRKGNEEKIIVH.

The protein belongs to the AIR synthase family.

The protein localises to the cytoplasm. The catalysed reaction is 2-formamido-N(1)-(5-O-phospho-beta-D-ribosyl)acetamidine + ATP = 5-amino-1-(5-phospho-beta-D-ribosyl)imidazole + ADP + phosphate + H(+). The protein operates within purine metabolism; IMP biosynthesis via de novo pathway; 5-amino-1-(5-phospho-D-ribosyl)imidazole from N(2)-formyl-N(1)-(5-phospho-D-ribosyl)glycinamide: step 2/2. The sequence is that of Phosphoribosylformylglycinamidine cyclo-ligase from Ligilactobacillus salivarius (strain UCC118) (Lactobacillus salivarius).